We begin with the raw amino-acid sequence, 134 residues long: Flagellar basal-body rod protein FlgC (134 aa).

The protein belongs to the flagella basal body rod proteins family. As to quaternary structure, the basal body constitutes a major portion of the flagellar organelle and consists of four rings (L,P,S, and M) mounted on a central rod. The rod consists of about 26 subunits of FlgG in the distal portion, and FlgB, FlgC and FlgF are thought to build up the proximal portion of the rod with about 6 subunits each.

Its subcellular location is the bacterial flagellum basal body. The sequence is that of Flagellar basal-body rod protein FlgC (flgC) from Salmonella typhi.